Reading from the N-terminus, the 338-residue chain is Ketol-acid reductoisomerase (NADP(+)) (338 aa).

Positions 1-181 constitute a KARI N-terminal Rossmann domain; that stretch reads MKVYYDKDAD…GGTKGGVIET (181 aa). NADP(+) contacts are provided by residues 24–27, R47, and S52; that span reads YGSQ. H107 is an active-site residue. G133 contributes to the NADP(+) binding site. Positions 182–327 constitute a KARI C-terminal knotted domain; that stretch reads NFREETETDL…GQLRDMMPWI (146 aa). Mg(2+)-binding residues include D190, E194, E226, and E230. S251 contributes to the substrate binding site.

The protein belongs to the ketol-acid reductoisomerase family. Requires Mg(2+) as cofactor.

The enzyme catalyses (2R)-2,3-dihydroxy-3-methylbutanoate + NADP(+) = (2S)-2-acetolactate + NADPH + H(+). It catalyses the reaction (2R,3R)-2,3-dihydroxy-3-methylpentanoate + NADP(+) = (S)-2-ethyl-2-hydroxy-3-oxobutanoate + NADPH + H(+). It participates in amino-acid biosynthesis; L-isoleucine biosynthesis; L-isoleucine from 2-oxobutanoate: step 2/4. The protein operates within amino-acid biosynthesis; L-valine biosynthesis; L-valine from pyruvate: step 2/4. Functionally, involved in the biosynthesis of branched-chain amino acids (BCAA). Catalyzes an alkyl-migration followed by a ketol-acid reduction of (S)-2-acetolactate (S2AL) to yield (R)-2,3-dihydroxy-isovalerate. In the isomerase reaction, S2AL is rearranged via a Mg-dependent methyl migration to produce 3-hydroxy-3-methyl-2-ketobutyrate (HMKB). In the reductase reaction, this 2-ketoacid undergoes a metal-dependent reduction by NADPH to yield (R)-2,3-dihydroxy-isovalerate. The sequence is that of Ketol-acid reductoisomerase (NADP(+)) from Aromatoleum aromaticum (strain DSM 19018 / LMG 30748 / EbN1) (Azoarcus sp. (strain EbN1)).